The following is a 307-amino-acid chain: Dihydroorotate dehydrogenase A (fumarate) (307 aa).

FMN-binding positions include S21 and 46–47 (KT). Substrate is bound by residues K46, 70–74 (NSVGL), and N130. N130 lines the FMN pocket. C133 serves as the catalytic Nucleophile. FMN-binding residues include K168 and I194. 195–196 (NT) is a binding site for substrate. FMN-binding positions include G220, 246–247 (GG), and 268–269 (GS).

Belongs to the dihydroorotate dehydrogenase family. Type 1 subfamily. In terms of assembly, homodimer. FMN is required as a cofactor.

Its subcellular location is the cytoplasm. The enzyme catalyses (S)-dihydroorotate + fumarate = orotate + succinate. It participates in pyrimidine metabolism; UMP biosynthesis via de novo pathway. Functionally, catalyzes the conversion of dihydroorotate to orotate with fumarate as the electron acceptor. The chain is Dihydroorotate dehydrogenase A (fumarate) (pyrD) from Lactobacillus delbrueckii subsp. bulgaricus (strain ATCC BAA-365 / Lb-18).